The chain runs to 425 residues: Tyrosine--tRNA ligase (425 aa).

Tyr-33 lines the L-tyrosine pocket. The 'HIGH' region motif lies at 38 to 47 (PTADSLHLGN). L-tyrosine-binding residues include Tyr-170 and Gln-174. The short motif at 230 to 234 (KFGKS) is the 'KMSKS' region element. Lys-233 contacts ATP. Positions 356–422 (KKLIDLLVET…GKKNKMIIRL (67 aa)) constitute an S4 RNA-binding domain.

This sequence belongs to the class-I aminoacyl-tRNA synthetase family. TyrS type 1 subfamily. In terms of assembly, homodimer.

The protein localises to the cytoplasm. It carries out the reaction tRNA(Tyr) + L-tyrosine + ATP = L-tyrosyl-tRNA(Tyr) + AMP + diphosphate + H(+). Functionally, catalyzes the attachment of tyrosine to tRNA(Tyr) in a two-step reaction: tyrosine is first activated by ATP to form Tyr-AMP and then transferred to the acceptor end of tRNA(Tyr). The sequence is that of Tyrosine--tRNA ligase from Protochlamydia amoebophila (strain UWE25).